Reading from the N-terminus, the 226-residue chain is Potassium/proton antiporter CemA (226 aa).

Helical transmembrane passes span 7–27 (FTSLPYLASIVFLPWWISLSF), 111–131 (IICFAILSGYSILGNEGLFIL), and 186–206 (IISGLVSTFPVILDTILKYWI).

Belongs to the CemA family.

It localises to the plastid. It is found in the chloroplast inner membrane. It catalyses the reaction K(+)(in) + H(+)(out) = K(+)(out) + H(+)(in). In terms of biological role, contributes to K(+)/H(+) antiport activity by supporting proton efflux to control proton extrusion and homeostasis in chloroplasts in a light-dependent manner to modulate photosynthesis. Prevents excessive induction of non-photochemical quenching (NPQ) under continuous-light conditions. Indirectly promotes efficient inorganic carbon uptake into chloroplasts. This Buxus microphylla (Littleleaf boxwood) protein is Potassium/proton antiporter CemA.